Consider the following 249-residue polypeptide: tRNA pseudouridine synthase A (249 aa).

The Nucleophile role is filled by aspartate 53. Tyrosine 111 lines the substrate pocket.

Belongs to the tRNA pseudouridine synthase TruA family. Homodimer.

The enzyme catalyses uridine(38/39/40) in tRNA = pseudouridine(38/39/40) in tRNA. Functionally, formation of pseudouridine at positions 38, 39 and 40 in the anticodon stem and loop of transfer RNAs. In Streptococcus pneumoniae serotype 2 (strain D39 / NCTC 7466), this protein is tRNA pseudouridine synthase A.